The primary structure comprises 238 residues: Green fluorescent protein (238 aa).

The 5-imidazolinone (Ser-Gly) cross-link spans 65–67; it reads SYG. (Z)-2,3-didehydrotyrosine is present on Tyr66.

This sequence belongs to the GFP family. Monomer. Contains a chromophore consisting of modified amino acid residues. The chromophore is formed by autocatalytic backbone condensation between Ser-65 and Gly-67, and oxidation of Tyr-66 to didehydrotyrosine. Maturation of the chromophore requires nothing other than molecular oxygen. In terms of tissue distribution, photocytes.

In terms of biological role, energy-transfer acceptor. Its role is to transduce the blue chemiluminescence of the protein aequorin into green fluorescent light by energy transfer. Fluoresces in vivo upon receiving energy from the Ca(2+)-activated photoprotein aequorin. The protein is Green fluorescent protein (GFP) of Aequorea victoria (Water jellyfish).